Reading from the N-terminus, the 208-residue chain is Probable transcriptional regulator ycf29 (208 aa).

Residues 11-118 (KLILIEPEEH…ELIAIISNLI (108 aa)) form the Response regulatory domain. Residue aspartate 60 is modified to 4-aspartylphosphate. The HTH luxR-type domain maps to 146–208 (TSFSYINLTV…NRIQILSYFN (63 aa)).

It is found in the plastid. The protein resides in the chloroplast. The polypeptide is Probable transcriptional regulator ycf29 (ycf29) (Guillardia theta (Cryptophyte)).